Here is an 86-residue protein sequence, read N- to C-terminus: Cell division topological specificity factor (86 aa).

It belongs to the MinE family.

Prevents the cell division inhibition by proteins MinC and MinD at internal division sites while permitting inhibition at polar sites. This ensures cell division at the proper site by restricting the formation of a division septum at the midpoint of the long axis of the cell. The chain is Cell division topological specificity factor from Stenotrophomonas maltophilia (strain R551-3).